Reading from the N-terminus, the 304-residue chain is HPr kinase/phosphorylase (304 aa).

Catalysis depends on residues His-136 and Lys-157. An ATP-binding site is contributed by 151-158 (GESGIGKS). Position 158 (Ser-158) interacts with Mg(2+). Catalysis depends on Asp-175, which acts as the Proton acceptor; for phosphorylation activity. Proton donor; for dephosphorylation activity. Residues 198–207 (LEVRGMGIID) are important for the catalytic mechanism of both phosphorylation and dephosphorylation. Glu-199 lines the Mg(2+) pocket. The active site involves Arg-240. The segment at 261–266 (PIRPGR) is important for the catalytic mechanism of dephosphorylation.

Belongs to the HPrK/P family. Homohexamer. Requires Mg(2+) as cofactor.

The catalysed reaction is [HPr protein]-L-serine + ATP = [HPr protein]-O-phospho-L-serine + ADP + H(+). The enzyme catalyses [HPr protein]-O-phospho-L-serine + phosphate + H(+) = [HPr protein]-L-serine + diphosphate. In terms of biological role, catalyzes the ATP- as well as the pyrophosphate-dependent phosphorylation of a specific serine residue in HPr, a phosphocarrier protein of the phosphoenolpyruvate-dependent sugar phosphotransferase system (PTS). HprK/P also catalyzes the pyrophosphate-producing, inorganic phosphate-dependent dephosphorylation (phosphorolysis) of seryl-phosphorylated HPr (P-Ser-HPr). The two antagonistic activities of HprK/P are regulated by several intracellular metabolites, which change their concentration in response to the absence or presence of rapidly metabolisable carbon sources (glucose, fructose, etc.) in the growth medium. Therefore, by controlling the phosphorylation state of HPr, HPrK/P is a sensor enzyme that plays a major role in the regulation of carbon metabolism and sugar transport: it mediates carbon catabolite repression (CCR), and regulates PTS-catalyzed carbohydrate uptake and inducer exclusion. The polypeptide is HPr kinase/phosphorylase (Clostridium acetobutylicum (strain ATCC 824 / DSM 792 / JCM 1419 / IAM 19013 / LMG 5710 / NBRC 13948 / NRRL B-527 / VKM B-1787 / 2291 / W)).